The primary structure comprises 445 residues: F-box protein At5g10340 (445 aa).

The F-box domain maps to 64 to 112 (SMEELLPHDVIEYHIMVRLDVKTLLKFKSVSKQWMSTIQSPSFQERQLI).

The chain is F-box protein At5g10340 from Arabidopsis thaliana (Mouse-ear cress).